A 576-amino-acid polypeptide reads, in one-letter code: Sodium/proton antiporter 1 (576 aa).

Residues 1-60 constitute a chloroplast transit peptide; that stretch reads MAVFPIGSHFAPPHQLTKRHVIATSSPISISTRLPQNVSFSKVSGVTGSTRLSKHGVLVR. Transmembrane regions (helical) follow at residues 237–257, 279–299, 320–340, 357–377, 379–399, 426–446, 462–482, 501–521, and 541–561; these read TLLWVVGFVTFFLSSILDNLT, LGGVVVIAANAGGAWTPIGDV, FLPSVVSLAVPLALMSLTSEV, APRGKLVFGVGLGALVFVPVF, ALTGLPPYMGILLGLGVLWIL, GALFFLGILLSVSSLEAAGIL, LIASAIGVVSAIIDNVPLVAA, LIAFCAGTGGSMLVIGSAAGV, and FAFAGYAAGIAAYLAVHNLHF.

The protein belongs to the NhaD Na(+)/H(+) (TC 2.A.62) antiporter family. In terms of tissue distribution, mostly expressed in mature and senescent leaves, and, to a lower extent, in seeds, roots, shoots, flowers and developing siliques.

Its subcellular location is the plastid. It localises to the chloroplast membrane. The protein localises to the chloroplast envelope. Na(+)/H(+) antiporter that extrudes sodium in exchange for external protons. The protein is Sodium/proton antiporter 1 of Arabidopsis thaliana (Mouse-ear cress).